The chain runs to 151 residues: Transcriptional regulator MraZ (151 aa).

SpoVT-AbrB domains follow at residues 5–52 (ATAV…PLDE) and 81–124 (ATEC…SDVE).

This sequence belongs to the MraZ family. Forms oligomers.

Its subcellular location is the cytoplasm. It localises to the nucleoid. The polypeptide is Transcriptional regulator MraZ (Haemophilus influenzae (strain 86-028NP)).